A 265-amino-acid chain; its full sequence is Hydroxyethylthiazole kinase (265 aa).

Position 43 (methionine 43) interacts with substrate. Arginine 119 and serine 165 together coordinate ATP. Residue alanine 192 coordinates substrate.

Belongs to the Thz kinase family. It depends on Mg(2+) as a cofactor.

It catalyses the reaction 5-(2-hydroxyethyl)-4-methylthiazole + ATP = 4-methyl-5-(2-phosphooxyethyl)-thiazole + ADP + H(+). It participates in cofactor biosynthesis; thiamine diphosphate biosynthesis; 4-methyl-5-(2-phosphoethyl)-thiazole from 5-(2-hydroxyethyl)-4-methylthiazole: step 1/1. Functionally, catalyzes the phosphorylation of the hydroxyl group of 4-methyl-5-beta-hydroxyethylthiazole (THZ). The polypeptide is Hydroxyethylthiazole kinase (Haemophilus influenzae (strain 86-028NP)).